We begin with the raw amino-acid sequence, 79 residues long: Major outer membrane lipoprotein Lpp 3 (79 aa).

The N-terminal stretch at Met1–Gly21 is a signal peptide. Residue Cys22 is the site of N-palmitoyl cysteine attachment. Cys22 carries S-diacylglycerol cysteine lipidation. 2 consecutive repeats follow at residues Asn25–Val35 and Ser39–Val49. Positions Ile28 to Arg76 form a coiled coil. Lys79 carries the N6-murein peptidoglycan lysine modification.

The protein belongs to the Lpp family. Homotrimer.

It is found in the cell outer membrane. The protein localises to the secreted. Its subcellular location is the cell wall. In terms of biological role, a highly abundant outer membrane lipoprotein that controls the distance between the inner and outer membranes. The only protein known to be covalently linked to the peptidoglycan network (PGN). Also non-covalently binds the PGN. The link between the cell outer membrane and PGN contributes to maintenance of the structural and functional integrity of the cell envelope, and maintains the correct distance between the PGN and the outer membrane. The sequence is that of Major outer membrane lipoprotein Lpp 3 from Salmonella paratyphi A (strain ATCC 9150 / SARB42).